The chain runs to 80 residues: Acyl carrier protein (80 aa).

The region spanning 4-79 (EAILEKVRSI…DAVKYIEDKQ (76 aa)) is the Carrier domain. The residue at position 39 (serine 39) is an O-(pantetheine 4'-phosphoryl)serine.

The protein belongs to the acyl carrier protein (ACP) family. Post-translationally, 4'-phosphopantetheine is transferred from CoA to a specific serine of apo-ACP by AcpS. This modification is essential for activity because fatty acids are bound in thioester linkage to the sulfhydryl of the prosthetic group.

The protein localises to the cytoplasm. The protein operates within lipid metabolism; fatty acid biosynthesis. In terms of biological role, carrier of the growing fatty acid chain in fatty acid biosynthesis. The chain is Acyl carrier protein from Parasynechococcus marenigrum (strain WH8102).